A 156-amino-acid polypeptide reads, in one-letter code: ATP synthase subunit b (156 aa).

The chain crosses the membrane as a helical span at residues 5–25; it reads LTLIGQAIAFAIFVAFCMKFV.

It belongs to the ATPase B chain family. F-type ATPases have 2 components, F(1) - the catalytic core - and F(0) - the membrane proton channel. F(1) has five subunits: alpha(3), beta(3), gamma(1), delta(1), epsilon(1). F(0) has three main subunits: a(1), b(2) and c(10-14). The alpha and beta chains form an alternating ring which encloses part of the gamma chain. F(1) is attached to F(0) by a central stalk formed by the gamma and epsilon chains, while a peripheral stalk is formed by the delta and b chains.

Its subcellular location is the cell inner membrane. In terms of biological role, f(1)F(0) ATP synthase produces ATP from ADP in the presence of a proton or sodium gradient. F-type ATPases consist of two structural domains, F(1) containing the extramembraneous catalytic core and F(0) containing the membrane proton channel, linked together by a central stalk and a peripheral stalk. During catalysis, ATP synthesis in the catalytic domain of F(1) is coupled via a rotary mechanism of the central stalk subunits to proton translocation. Component of the F(0) channel, it forms part of the peripheral stalk, linking F(1) to F(0). This chain is ATP synthase subunit b, found in Acinetobacter baylyi (strain ATCC 33305 / BD413 / ADP1).